A 450-amino-acid polypeptide reads, in one-letter code: Phosphoglucosamine mutase (450 aa).

Serine 101 serves as the catalytic Phosphoserine intermediate. The Mg(2+) site is built by serine 101, aspartate 242, aspartate 244, and aspartate 246. Serine 101 is subject to Phosphoserine.

It belongs to the phosphohexose mutase family. Mg(2+) serves as cofactor. Post-translationally, activated by phosphorylation.

The catalysed reaction is alpha-D-glucosamine 1-phosphate = D-glucosamine 6-phosphate. Functionally, catalyzes the conversion of glucosamine-6-phosphate to glucosamine-1-phosphate. The chain is Phosphoglucosamine mutase from Rhodopseudomonas palustris (strain TIE-1).